A 186-amino-acid polypeptide reads, in one-letter code: Biphenyl dioxygenase subunit beta (186 aa).

The protein belongs to the bacterial ring-hydroxylating dioxygenase beta subunit family. As to quaternary structure, heterohexamer consisting of 3 BphA subunits and 3 BphE subunits. A ferredoxin (BphF) and a ferredoxin reductase (BphG) must be present to obtain activity.

The enzyme catalyses biphenyl + NADH + O2 + H(+) = (2R,3S)-3-phenylcyclohexa-3,5-diene-1,2-diol + NAD(+). The protein operates within xenobiotic degradation; biphenyl degradation; 2-hydroxy-2,4-pentadienoate and benzoate from biphenyl: step 1/4. The beta subunit may be responsible for the substrate specificity of the enzyme. This chain is Biphenyl dioxygenase subunit beta (bphE), found in Comamonas testosteroni (Pseudomonas testosteroni).